The following is a 470-amino-acid chain: 3-isopropylmalate dehydratase large subunit (470 aa).

[4Fe-4S] cluster is bound by residues Cys-349, Cys-409, and Cys-412.

The protein belongs to the aconitase/IPM isomerase family. LeuC type 1 subfamily. Heterodimer of LeuC and LeuD. [4Fe-4S] cluster serves as cofactor.

The catalysed reaction is (2R,3S)-3-isopropylmalate = (2S)-2-isopropylmalate. It participates in amino-acid biosynthesis; L-leucine biosynthesis; L-leucine from 3-methyl-2-oxobutanoate: step 2/4. In terms of biological role, catalyzes the isomerization between 2-isopropylmalate and 3-isopropylmalate, via the formation of 2-isopropylmaleate. The protein is 3-isopropylmalate dehydratase large subunit of Campylobacter jejuni subsp. jejuni serotype O:2 (strain ATCC 700819 / NCTC 11168).